The sequence spans 420 residues: Probable glycosyltransferase YdaM (420 aa).

4 helical membrane-spanning segments follow: residues 4-24, 299-319, 332-352, and 371-391; these read TLFF…MFLM, IIFD…GVIM, LHLS…FLFM, and FFIV…LVIY.

It belongs to the glycosyltransferase 2 family.

The protein localises to the cell membrane. This chain is Probable glycosyltransferase YdaM (ydaM), found in Bacillus subtilis (strain 168).